The chain runs to 342 residues: Farnesyl pyrophosphate synthase 2 (342 aa).

3 residues coordinate isopentenyl diphosphate: K47, R50, and Q86. Mg(2+)-binding residues include D93 and D97. Residue R102 participates in dimethylallyl diphosphate binding. R103 contacts isopentenyl diphosphate. Dimethylallyl diphosphate is bound by residues K190, T191, Q229, K246, and K255.

It belongs to the FPP/GGPP synthase family. Mg(2+) is required as a cofactor.

Its subcellular location is the cytoplasm. The catalysed reaction is isopentenyl diphosphate + dimethylallyl diphosphate = (2E)-geranyl diphosphate + diphosphate. It catalyses the reaction isopentenyl diphosphate + (2E)-geranyl diphosphate = (2E,6E)-farnesyl diphosphate + diphosphate. Its pathway is isoprenoid biosynthesis; farnesyl diphosphate biosynthesis; farnesyl diphosphate from geranyl diphosphate and isopentenyl diphosphate: step 1/1. It participates in isoprenoid biosynthesis; geranyl diphosphate biosynthesis; geranyl diphosphate from dimethylallyl diphosphate and isopentenyl diphosphate: step 1/1. Catalyzes the sequential condensation of isopentenyl pyrophosphate with the allylic pyrophosphates, dimethylallyl pyrophosphate, and then with the resultant geranylpyrophosphate to the ultimate product farnesyl pyrophosphate. In Lupinus albus (White lupine), this protein is Farnesyl pyrophosphate synthase 2 (FPS2).